A 329-amino-acid polypeptide reads, in one-letter code: tRNA dimethylallyltransferase (329 aa).

24-31 contributes to the ATP binding site; that stretch reads GSTGIGKT. 26 to 31 provides a ligand contact to substrate; that stretch reads TGIGKT. Residues 49–52 are interaction with substrate tRNA; the sequence is DSMQ.

It belongs to the IPP transferase family. In terms of assembly, monomer. Mg(2+) is required as a cofactor.

The catalysed reaction is adenosine(37) in tRNA + dimethylallyl diphosphate = N(6)-dimethylallyladenosine(37) in tRNA + diphosphate. Functionally, catalyzes the transfer of a dimethylallyl group onto the adenine at position 37 in tRNAs that read codons beginning with uridine, leading to the formation of N6-(dimethylallyl)adenosine (i(6)A). This Methylacidiphilum infernorum (isolate V4) (Methylokorus infernorum (strain V4)) protein is tRNA dimethylallyltransferase.